The primary structure comprises 205 residues: Mitochondrial ATP-independent inner membrane protease subunit 2 (205 aa).

Residues glutamate 59 and arginine 104 contribute to the active site.

This sequence belongs to the peptidase S26 family. IMP1 subfamily. Heterodimer of 2 subunits, IMP1A/B and IMP12.

The protein resides in the mitochondrion inner membrane. Catalyzes the removal of transit peptides required for the targeting of proteins from the mitochondrial matrix, across the inner membrane, into the inter-membrane space. This is Mitochondrial ATP-independent inner membrane protease subunit 2 from Arabidopsis thaliana (Mouse-ear cress).